The sequence spans 78 residues: Large ribosomal subunit protein bL28 (78 aa).

The segment at 1–22 is disordered; sequence MAKVCQVTGKRPVTGHNVSHAK.

Belongs to the bacterial ribosomal protein bL28 family.

This Teredinibacter turnerae (strain ATCC 39867 / T7901) protein is Large ribosomal subunit protein bL28.